The following is a 308-amino-acid chain: Cytochrome b (308 aa).

Helical transmembrane passes span 1 to 21 (FGSL…LLAM), 45 to 66 (WLIR…YLHI), 81 to 101 (WNIG…GYVL), and 146 to 166 (FFAL…IHLT). His-51 and His-65 together coordinate heme b. His-150 and His-164 together coordinate heme b. His-169 lines the a ubiquinone pocket. 3 helical membrane-spanning segments follow: residues 194–214 (TKDA…AMFS), 256–276 (LGGV…PLLH), and 288–308 (LSQF…WIGS).

It belongs to the cytochrome b family. In terms of assembly, the cytochrome bc1 complex contains 11 subunits: 3 respiratory subunits (MT-CYB, CYC1 and UQCRFS1), 2 core proteins (UQCRC1 and UQCRC2) and 6 low-molecular weight proteins (UQCRH/QCR6, UQCRB/QCR7, UQCRQ/QCR8, UQCR10/QCR9, UQCR11/QCR10 and a cleavage product of UQCRFS1). This cytochrome bc1 complex then forms a dimer. It depends on heme b as a cofactor.

Its subcellular location is the mitochondrion inner membrane. Functionally, component of the ubiquinol-cytochrome c reductase complex (complex III or cytochrome b-c1 complex) that is part of the mitochondrial respiratory chain. The b-c1 complex mediates electron transfer from ubiquinol to cytochrome c. Contributes to the generation of a proton gradient across the mitochondrial membrane that is then used for ATP synthesis. This Zaratornis stresemanni (White-cheeked cotinga) protein is Cytochrome b (MT-CYB).